A 95-amino-acid chain; its full sequence is uncharacterized protein (95 aa).

The chain crosses the membrane as a helical span at residues 29 to 53 (LVSTATCMAALFLRFKLIAWVAFIL).

It localises to the membrane. This is an uncharacterized protein from Schizosaccharomyces pombe (strain 972 / ATCC 24843) (Fission yeast).